The sequence spans 260 residues: Dehydrogenase/reductase SDR family member 4 (260 aa).

18 to 42 contacts NADP(+); it reads IVTASTDGIGLAIARRLAQDGAHVV. An N6-acetyllysine; alternate modification is found at Lys74. The residue at position 74 (Lys74) is an N6-succinyllysine; alternate. Ser151 is a substrate binding site. Tyr164 (proton acceptor) is an active-site residue. Position 168 (Lys168) interacts with NADP(+). An N6-acetyllysine; alternate modification is found at Lys198. Lys198 bears the N6-succinyllysine; alternate mark. A Phosphoserine modification is found at Ser202. At Lys209 the chain carries N6-succinyllysine. Residues 258 to 260 carry the Peroxisomal targeting signal motif; sequence SRL.

This sequence belongs to the short-chain dehydrogenases/reductases (SDR) family. In terms of assembly, homotetramer. In terms of tissue distribution, detected in liver and kidney. Detected at lower levels in heart, lung, spleen, small intestine, testis, brain and stomach.

It is found in the peroxisome. The enzyme catalyses a secondary alcohol + NADP(+) = a ketone + NADPH + H(+). It carries out the reaction 3alpha-hydroxy-5beta-pregnan-20-one + NADP(+) = 5beta-pregnan-3,20-dione + NADPH + H(+). The catalysed reaction is 5beta-dihydrotestosterone + NADPH + H(+) = 5beta-androstane-3alpha,17beta-diol + NADP(+). It catalyses the reaction all-trans-retinol + NADP(+) = all-trans-retinal + NADPH + H(+). The enzyme catalyses isatin + NADPH + H(+) = 3-hydroxyindolin-2-one + NADP(+). Inhibited by flavonoids (kaempferol, quercetin, quercitrin, genistein), myristic acid, pyrazole, barbital, phenobarbital and CuSO4. Its function is as follows. NADPH-dependent oxidoreductase which catalyzes the reduction of a variety of compounds bearing carbonyl groups including ketosteroids, alpha-dicarbonyl compounds, aldehydes, aromatic ketones and quinones. Reduces all-trans-retinal and 9-cis retinal. Reduces 3-ketosteroids and benzil into 3alpha-hydroxysteroids and S-benzoin, respectively, in contrast to the stereoselectivity of primates DHRS4s which produce 3beta-hydroxysteroids and R-benzoin. In the reverse reaction, catalyze the NADP-dependent oxidation of 3alpha-hydroxysteroids and alcohol, but with much lower efficiency. Involved in the metabolism of 3alpha-hydroxysteroids, retinoid, isatin and xenobiotic carbonyl compounds. This chain is Dehydrogenase/reductase SDR family member 4 (DHRS4), found in Oryctolagus cuniculus (Rabbit).